We begin with the raw amino-acid sequence, 476 residues long: Argininosuccinate lyase (476 aa).

Belongs to the lyase 1 family. Argininosuccinate lyase subfamily.

It localises to the cytoplasm. It catalyses the reaction 2-(N(omega)-L-arginino)succinate = fumarate + L-arginine. Its pathway is amino-acid biosynthesis; L-arginine biosynthesis; L-arginine from L-ornithine and carbamoyl phosphate: step 3/3. The chain is Argininosuccinate lyase from Leptothrix cholodnii (strain ATCC 51168 / LMG 8142 / SP-6) (Leptothrix discophora (strain SP-6)).